We begin with the raw amino-acid sequence, 1148 residues long: Trafficking protein particle complex subunit 9 (1148 aa).

Residues Ser-566 and Ser-953 each carry the phosphoserine modification.

Belongs to the NIBP family. In terms of assembly, component of the multisubunit TRAPP (transport protein particle) complex, which includes at least TRAPPC2, TRAPPC2L, TRAPPC3, TRAPPC3L, TRAPPC4, TRAPPC5, TRAPPC8, TRAPPC9, TRAPPC10, TRAPPC11 and TRAPPC12. Directly interacts with IKBKB and MAP3K14. As to expression, expressed in neurons of the pyramidal layer of the cortex, in spinal cord motor neurons and white matter neurons (at protein level).

The protein localises to the golgi apparatus. Its subcellular location is the cis-Golgi network. It is found in the endoplasmic reticulum. The protein resides in the cytoplasm. Its function is as follows. Functions as an activator of NF-kappa-B through increased phosphorylation of the IKK complex. May function in neuronal cells differentiation. May play a role in vesicular transport from endoplasmic reticulum to Golgi. The chain is Trafficking protein particle complex subunit 9 (Trappc9) from Mus musculus (Mouse).